The following is a 452-amino-acid chain: Bifunctional protein GlmU (452 aa).

The pyrophosphorylase stretch occupies residues 1–225 (MEVVILAAGQ…VSETLGVNSK (225 aa)). UDP-N-acetyl-alpha-D-glucosamine-binding positions include 6–9 (LAAG), Lys20, Gln71, 76–77 (GT), 98–100 (YGD), Gly135, Glu150, Asn165, and Asn223. Asp100 is a Mg(2+) binding site. Asn223 is a Mg(2+) binding site. A linker region spans residues 226 to 246 (PQLAELERIHQRNIAQRLMED). The interval 247 to 452 (GVTLIDPARI…AGWKRPVKQR (206 aa)) is N-acetyltransferase. UDP-N-acetyl-alpha-D-glucosamine contacts are provided by Arg329 and Lys347. His359 functions as the Proton acceptor in the catalytic mechanism. Residues Tyr362 and Asn373 each coordinate UDP-N-acetyl-alpha-D-glucosamine. Residues Ala376, 382–383 (NY), Ser401, Ala419, and Arg436 contribute to the acetyl-CoA site.

In the N-terminal section; belongs to the N-acetylglucosamine-1-phosphate uridyltransferase family. The protein in the C-terminal section; belongs to the transferase hexapeptide repeat family. As to quaternary structure, homotrimer. The cofactor is Mg(2+).

It localises to the cytoplasm. It catalyses the reaction alpha-D-glucosamine 1-phosphate + acetyl-CoA = N-acetyl-alpha-D-glucosamine 1-phosphate + CoA + H(+). The catalysed reaction is N-acetyl-alpha-D-glucosamine 1-phosphate + UTP + H(+) = UDP-N-acetyl-alpha-D-glucosamine + diphosphate. Its pathway is nucleotide-sugar biosynthesis; UDP-N-acetyl-alpha-D-glucosamine biosynthesis; N-acetyl-alpha-D-glucosamine 1-phosphate from alpha-D-glucosamine 6-phosphate (route II): step 2/2. The protein operates within nucleotide-sugar biosynthesis; UDP-N-acetyl-alpha-D-glucosamine biosynthesis; UDP-N-acetyl-alpha-D-glucosamine from N-acetyl-alpha-D-glucosamine 1-phosphate: step 1/1. It functions in the pathway bacterial outer membrane biogenesis; LPS lipid A biosynthesis. Functionally, catalyzes the last two sequential reactions in the de novo biosynthetic pathway for UDP-N-acetylglucosamine (UDP-GlcNAc). The C-terminal domain catalyzes the transfer of acetyl group from acetyl coenzyme A to glucosamine-1-phosphate (GlcN-1-P) to produce N-acetylglucosamine-1-phosphate (GlcNAc-1-P), which is converted into UDP-GlcNAc by the transfer of uridine 5-monophosphate (from uridine 5-triphosphate), a reaction catalyzed by the N-terminal domain. The polypeptide is Bifunctional protein GlmU (Azoarcus sp. (strain BH72)).